Here is a 247-residue protein sequence, read N- to C-terminus: ATP synthase subunit a, chloroplastic (247 aa).

The next 5 membrane-spanning stretches (helical) occupy residues 38–58 (QVLI…AIAV), 95–115 (VPFI…GALL), 134–154 (INTT…AGLT), 199–219 (LVVV…VMFL), and 220–240 (GLFT…AYIG).

The protein belongs to the ATPase A chain family. As to quaternary structure, F-type ATPases have 2 components, CF(1) - the catalytic core - and CF(0) - the membrane proton channel. CF(1) has five subunits: alpha(3), beta(3), gamma(1), delta(1), epsilon(1). CF(0) has four main subunits: a, b, b' and c.

It localises to the plastid. It is found in the chloroplast thylakoid membrane. Its function is as follows. Key component of the proton channel; it plays a direct role in the translocation of protons across the membrane. The protein is ATP synthase subunit a, chloroplastic of Calycanthus floridus var. glaucus (Eastern sweetshrub).